We begin with the raw amino-acid sequence, 115 residues long: uncharacterized protein (115 aa).

Residues 63–108 (GSPCGFEFREAITCQKTNSDGEIEQGACGKELMSFMECVTRTQCFG) form the CHCH domain. 2 short sequence motifs (cx9C motif) span residues 66 to 76 (CGFEFREAITC) and 90 to 100 (CGKELMSFMEC). 2 cysteine pairs are disulfide-bonded: cysteine 66–cysteine 100 and cysteine 76–cysteine 90.

This is an uncharacterized protein from Caenorhabditis elegans.